A 409-amino-acid polypeptide reads, in one-letter code: LysM domain-containing GPI-anchored protein LYP6 (409 aa).

Residues 1–27 (MAGWPAAEAAGALVVAILAAAAGGAAG) form the signal peptide. 4 cysteine pairs are disulfide-bonded: Cys34–Cys100, Cys40–Cys166, Cys98–Cys164, and Cys100–Cys166. The region spanning 110–160 (VRYSARPADTLASVADVVFAGLASADQIRTANGLSAEDPDAPLDAGATLVV) is the LysM 1 domain. Asn168 carries N-linked (GlcNAc...) asparagine glycosylation. The 44-residue stretch at 179 to 222 (LSYVVRVGDTVQSIAATHATTVTDISNVNAMGSPIVAPGDILAI) folds into the LysM 2 domain. Cystine bridges form between Cys227-Cys259 and Cys254-Cys282. N-linked (GlcNAc...) asparagine glycosylation is present at Asn244. N-linked (GlcNAc...) asparagine glycans are attached at residues Asn291, Asn302, and Asn313. The interval 353–387 (SPAPGAGEAGGDIPGFPGSSNVSPANGPSGSVSQA) is disordered. Over residues 370–387 (GSSNVSPANGPSGSVSQA) the composition is skewed to polar residues. Residue Ala387 is the site of GPI-anchor amidated alanine attachment. Positions 388–409 (ASVNRPHQIVALILSVALYFQM) are cleaved as a propeptide — removed in mature form.

Interacts with LYP4. Interacts with CERK1. Interacts with CEBIP. In terms of tissue distribution, expressed in roots and leaves.

The protein resides in the cell membrane. Functions in innate immunity. Functions as a pattern recognition receptor (PRR), sensing bacterial peptidoglycan (PGN) and fungal chitin at the cell surface. Involved in resistance against the bacterial pathogen Xanthomonas oryzae pv. oryzae (Xoo) and the fungal pathogen Magnaporthe oryzae. Binds PGN and fungal chitin in vitro. Involved in microbe-associated molecular patterns (MAMPs) perception and participates in the activation of defense genes against the bacterial pathogen Xanthomonas oryzae pv. oryzicola (Xoc) or the fungal pathogen Magnaporthe oryzae. This is LysM domain-containing GPI-anchored protein LYP6 from Oryza sativa subsp. japonica (Rice).